The chain runs to 368 residues: 4-hydroxy-3-methylbut-2-en-1-yl diphosphate synthase (flavodoxin) (368 aa).

Positions 271, 274, 306, and 313 each coordinate [4Fe-4S] cluster.

It belongs to the IspG family. [4Fe-4S] cluster is required as a cofactor.

It carries out the reaction (2E)-4-hydroxy-3-methylbut-2-enyl diphosphate + oxidized [flavodoxin] + H2O + 2 H(+) = 2-C-methyl-D-erythritol 2,4-cyclic diphosphate + reduced [flavodoxin]. The protein operates within isoprenoid biosynthesis; isopentenyl diphosphate biosynthesis via DXP pathway; isopentenyl diphosphate from 1-deoxy-D-xylulose 5-phosphate: step 5/6. In terms of biological role, converts 2C-methyl-D-erythritol 2,4-cyclodiphosphate (ME-2,4cPP) into 1-hydroxy-2-methyl-2-(E)-butenyl 4-diphosphate. The sequence is that of 4-hydroxy-3-methylbut-2-en-1-yl diphosphate synthase (flavodoxin) from Haemophilus influenzae (strain ATCC 51907 / DSM 11121 / KW20 / Rd).